The primary structure comprises 40 residues: Proteinase inhibitor IIB (40 aa).

Disulfide bonds link cysteine 2–cysteine 16, cysteine 6–cysteine 28, and cysteine 12–cysteine 38.

It belongs to the protease inhibitor I20 (potato type II proteinase inhibitor) family.

The protein resides in the secreted. Its function is as follows. Inhibits chymotrypsin and subtilisin strongly. In Solanum tuberosum (Potato), this protein is Proteinase inhibitor IIB.